The primary structure comprises 101 residues: Small ribosomal subunit protein uS14A (101 aa).

The protein belongs to the universal ribosomal protein uS14 family. As to quaternary structure, part of the 30S ribosomal subunit. Contacts proteins S3 and S10.

Binds 16S rRNA, required for the assembly of 30S particles and may also be responsible for determining the conformation of the 16S rRNA at the A site. In Salinispora tropica (strain ATCC BAA-916 / DSM 44818 / JCM 13857 / NBRC 105044 / CNB-440), this protein is Small ribosomal subunit protein uS14A.